The sequence spans 387 residues: Methylthioribose-1-phosphate isomerase (387 aa).

The Proton donor role is filled by aspartate 257.

Belongs to the eIF-2B alpha/beta/delta subunits family. MtnA subfamily.

It localises to the cytoplasm. The protein resides in the nucleus. The catalysed reaction is 5-(methylsulfanyl)-alpha-D-ribose 1-phosphate = 5-(methylsulfanyl)-D-ribulose 1-phosphate. The protein operates within amino-acid biosynthesis; L-methionine biosynthesis via salvage pathway; L-methionine from S-methyl-5-thio-alpha-D-ribose 1-phosphate: step 1/6. Functionally, catalyzes the interconversion of methylthioribose-1-phosphate (MTR-1-P) into methylthioribulose-1-phosphate (MTRu-1-P). In Neosartorya fischeri (strain ATCC 1020 / DSM 3700 / CBS 544.65 / FGSC A1164 / JCM 1740 / NRRL 181 / WB 181) (Aspergillus fischerianus), this protein is Methylthioribose-1-phosphate isomerase (mri1).